A 191-amino-acid polypeptide reads, in one-letter code: Cdc42 homolog (191 aa).

10–17 (GDGAVGKT) serves as a coordination point for GTP. Residues 32–40 (YVPTVFDNY) carry the Effector region motif. GTP-binding positions include 57–61 (DTAGQ) and 115–118 (TQID). At C188 the chain carries Cysteine methyl ester. The S-geranylgeranyl cysteine moiety is linked to residue C188. The propeptide at 189–191 (KFL) is removed in mature form.

The protein belongs to the small GTPase superfamily. Rho family. CDC42 subfamily.

It is found in the cell junction. Its subcellular location is the adherens junction. The protein resides in the cell membrane. The catalysed reaction is GTP + H2O = GDP + phosphate + H(+). Functionally, regulates mbt kinase activity and is also required to recruit mbt to adherens junctions. Together with mbt, regulates photoreceptor cell morphogenesis. The chain is Cdc42 homolog from Drosophila pseudoobscura pseudoobscura (Fruit fly).